The chain runs to 632 residues: Biosynthetic arginine decarboxylase (632 aa).

Lysine 101 bears the N6-(pyridoxal phosphate)lysine mark. 281–291 (FDVGGGLGVDY) contacts substrate.

Belongs to the Orn/Lys/Arg decarboxylase class-II family. SpeA subfamily. It depends on Mg(2+) as a cofactor. Requires pyridoxal 5'-phosphate as cofactor.

It catalyses the reaction L-arginine + H(+) = agmatine + CO2. Its pathway is amine and polyamine biosynthesis; agmatine biosynthesis; agmatine from L-arginine: step 1/1. Functionally, catalyzes the biosynthesis of agmatine from arginine. This chain is Biosynthetic arginine decarboxylase, found in Escherichia coli O157:H7 (strain EC4115 / EHEC).